The sequence spans 318 residues: Mitochondrial coenzyme A transporter SLC25A42 (318 aa).

Solcar repeat units lie at residues 31–117 (RQVL…YKRI), 129–214 (LPPW…LKSL), and 224–312 (PYPF…MQIL). Transmembrane regions (helical) follow at residues 33-53 (VLSS…AVAP), 89-109 (LWRG…IQFS), 135-155 (LFAG…LDLV), 186-206 (LYHG…LSFF), 230-250 (MIFG…LDVV), and 293-313 (VKGP…QILL).

It belongs to the mitochondrial carrier (TC 2.A.29) family.

It is found in the mitochondrion inner membrane. The enzyme catalyses ADP(out) + CoA(in) = ADP(in) + CoA(out). It carries out the reaction 3'-dephospho-CoA(in) + ADP(out) = 3'-dephospho-CoA(out) + ADP(in). It catalyses the reaction adenosine 3',5'-bisphosphate(in) + ADP(out) = adenosine 3',5'-bisphosphate(out) + ADP(in). The catalysed reaction is AMP(in) + ADP(out) = AMP(out) + ADP(in). The enzyme catalyses dADP(in) + ADP(out) = dADP(out) + ADP(in). It carries out the reaction ADP(in) + ATP(out) = ADP(out) + ATP(in). Mitochondrial carrier mediating the transport of coenzyme A (CoA) in mitochondria in exchange for intramitochondrial (deoxy)adenine nucleotides and adenosine 3',5'-diphosphate. The sequence is that of Mitochondrial coenzyme A transporter SLC25A42 (SLC25A42) from Homo sapiens (Human).